Reading from the N-terminus, the 986-residue chain is Vacuolar membrane protease (986 aa).

At 1–20 the chain is on the cytoplasmic side; that stretch reads MATPRAQKFNPIAFTPGPVT. Residues 21-41 form a helical membrane-spanning segment; the sequence is LITTIVYLALLIPILVISLVV. The Vacuolar portion of the chain corresponds to 42-392; that stretch reads PPAPETSPEG…AFAVFRLHTL (351 aa). N-linked (GlcNAc...) asparagine glycans are attached at residues N53, N116, and N119. Positions 175 and 187 each coordinate Zn(2+). E221 serves as the catalytic Proton acceptor. E222 lines the Zn(2+) pocket. N-linked (GlcNAc...) asparagine glycosylation occurs at N238. The Zn(2+) site is built by E247 and H320. A helical transmembrane segment spans residues 393-413; sequence FALSVTLLIVAPLVIFITAIV. At 414–447 the chain is on the cytoplasmic side; that stretch reads LSKTDRMYLFSMSKSLGGTDERVSLRGLRGLFRT. The chain crosses the membrane as a helical span at residues 448 to 468; that stretch reads PIILAVATVIPIGLAYLLEKV. At 469–477 the chain is on the vacuolar side; sequence NPYIVHSSQ. The helical transmembrane segment at 478 to 498 threads the bilayer; it reads FSVWSMMISVWIFLAWFLACA. Residues 499–509 are Cytoplasmic-facing; it reads ADFFRPSALHR. A helical membrane pass occupies residues 510 to 530; the sequence is AYSYTWIFIATWVMLVINTVY. The Vacuolar segment spans residues 531 to 534; sequence ANQK. Residues 535 to 555 form a helical membrane-spanning segment; it reads GIAAGYFVFFYFSGSFLATWV. At 556-665 the chain is on the cytoplasmic side; sequence SYLELFALPR…WSWTLPRWTW (110 aa). The segment at 595 to 620 is disordered; sequence ELPSDTGPHAEYPGDADETDPTESTS. The helical transmembrane segment at 666–686 threads the bilayer; sequence VLQLLLLAPIVLILVGQLALF. Residues 687 to 702 are Vacuolar-facing; the sequence is LTTSMSQVGSDGVSTF. Residues 703-723 traverse the membrane as a helical segment; sequence IVYLACAVFTTLLFAPLFPFI. Over 724 to 729 the chain is Cytoplasmic; the sequence is HRFTYH. A helical transmembrane segment spans residues 730–750; the sequence is IPTFLFLVFVGTLIYNLVAFP. Topologically, residues 751-986 are vacuolar; sequence FSPANRLKMF…VEASHGITIQ (236 aa). Residues N797, N840, and N948 are each glycosylated (N-linked (GlcNAc...) asparagine).

This sequence belongs to the peptidase M28 family. The cofactor is Zn(2+).

It is found in the vacuole membrane. In terms of biological role, may be involved in vacuolar sorting and osmoregulation. The chain is Vacuolar membrane protease from Blastomyces gilchristii (strain SLH14081) (Blastomyces dermatitidis).